Consider the following 441-residue polypeptide: Probable indole-3-acetic acid-amido synthetase GH3.9 (441 aa).

The protein belongs to the IAA-amido conjugating enzyme family. As to expression, expressed in etiolated seedlings and roots.

Functionally, may catalyze the synthesis of indole-3-acetic acid (IAA)-amino acid conjugates, providing a mechanism for the plant to cope with the presence of excess auxin. This chain is Probable indole-3-acetic acid-amido synthetase GH3.9 (GH3.9), found in Oryza sativa subsp. japonica (Rice).